We begin with the raw amino-acid sequence, 245 residues long: Ribonuclease PH (245 aa).

Residues arginine 86 and 124–126 contribute to the phosphate site; that span reads GTR.

This sequence belongs to the RNase PH family. In terms of assembly, homohexameric ring arranged as a trimer of dimers. It has been suggested that the active form is the dimer which binds tRNA and that the hexameric form protects the substrate recognition loop (approximately residues 65-82) from proteolysis.

The catalysed reaction is tRNA(n+1) + phosphate = tRNA(n) + a ribonucleoside 5'-diphosphate. Its function is as follows. Phosphorolytic 3'-5' exoribonuclease that plays an important role in tRNA 3'-end maturation. Removes nucleotide residues following the 3'-CCA terminus of tRNAs; can also add nucleotides to the ends of RNA molecules by using nucleoside diphosphates as substrates, but this may not be physiologically important. Probably plays a role in initiation of 16S rRNA degradation (leading to ribosome degradation) during starvation. Plays a role in the secondary pathway of 23S rRNA 3' end maturation. This Bacillus subtilis (strain 168) protein is Ribonuclease PH.